A 226-amino-acid chain; its full sequence is EEF1A lysine methyltransferase 1 (226 aa).

Residue S2 is modified to N-acetylserine. Residue S2 is modified to Phosphoserine.

Belongs to the class I-like SAM-binding methyltransferase superfamily. EFM5 family.

The protein resides in the cytoplasm. The catalysed reaction is L-lysyl-[protein] + 3 S-adenosyl-L-methionine = N(6),N(6),N(6)-trimethyl-L-lysyl-[protein] + 3 S-adenosyl-L-homocysteine + 3 H(+). Its function is as follows. Protein-lysine methyltransferase that selectively catalyzes the trimethylation of EEF1A at 'Lys-79'. The sequence is that of EEF1A lysine methyltransferase 1 from Bos taurus (Bovine).